A 244-amino-acid chain; its full sequence is ATP synthase subunit a (244 aa).

Helical transmembrane passes span 25-45 (ISFT…LLIF), 85-105 (YFAF…FGMI), 115-135 (IIVT…IGFM), 144-164 (LFVP…IEII), 193-213 (GFVI…SVAL), and 216-236 (LEIL…CIYL).

It belongs to the ATPase A chain family. In terms of assembly, F-type ATPases have 2 components, CF(1) - the catalytic core - and CF(0) - the membrane proton channel. CF(1) has five subunits: alpha(3), beta(3), gamma(1), delta(1), epsilon(1). CF(0) has three main subunits: a(1), b(2) and c(9-12). The alpha and beta chains form an alternating ring which encloses part of the gamma chain. CF(1) is attached to CF(0) by a central stalk formed by the gamma and epsilon chains, while a peripheral stalk is formed by the delta and b chains.

Its subcellular location is the cell inner membrane. Functionally, key component of the proton channel; it plays a direct role in the translocation of protons across the membrane. In Pelagibacter ubique (strain HTCC1062), this protein is ATP synthase subunit a.